We begin with the raw amino-acid sequence, 84 residues long: FMRFamide-like neuropeptides 26 (84 aa).

The N-terminal stretch at 1 to 19 (MKVMFMLALLFSSLVATSA) is a signal peptide. Positions 20–48 (FRLPFQFFGANEDFNSGLTKRNYYESKPY) are excised as a propeptide. Residues F61 and F82 each carry the phenylalanine amide modification.

The protein belongs to the FARP (FMRFamide related peptide) family. Each flp gene is expressed in a distinct set of neurons.

The protein resides in the secreted. Functionally, FMRFamides and FMRFamide-like peptides are neuropeptides. The protein is FMRFamide-like neuropeptides 26 of Caenorhabditis elegans.